Reading from the N-terminus, the 71-residue chain is Large ribosomal subunit protein uL29 (71 aa).

Residues Met-1–Glu-20 form a disordered region.

It belongs to the universal ribosomal protein uL29 family.

This is Large ribosomal subunit protein uL29 from Clostridium kluyveri (strain ATCC 8527 / DSM 555 / NBRC 12016 / NCIMB 10680 / K1).